A 958-amino-acid polypeptide reads, in one-letter code: MAVISVKPRRREKILQEVKNSSVYQTVFDSGTTQMQIPKYENKPFKPPRRVGSNKYTQLKPTATAVTTAPISKAKVTVNLKRSISAGPTLNLAKKPNNLSSNENTRYFTIMYRKPTTKKHKTWSGDGYATLKASSDKLCFYNEAGKFLGSSMLPSDSDSLFETLFKAGSNEVQLDYELKENAEIRSAKEALSQNMGNPSPPTTSTTETVPSTKNDGGKYQMPLSQLFSLNTVKRFKSVTKQTNEHMTTVPKTSQNSKAKKYYPVFDVNKIDNPIVMNKNAAAEVDVIVDPLLGKFLRPHQREGVKFMYDCLMGLARPTIENPDIDCTTKSLVLENDSDISGCLLADDMGLGKTLMSITLIWTLIRQTPFASKVSCSQSGIPLTGLCKKILVVCPVTLIGNWKREFGKWLNLSRIGVLTLSSRNSPDMDKMAVRNFLKVQRTYQVLIIGYEKLLSVSEELEKNKHLIDMLVCDEGHRLKNGASKILNTLKSLDIRRKLLLTGTPIQNDLNEFFTIIDFINPGILGSFASFKRRFIIPITRARDTANRYNEELLEKGEERSKEMIEITKRFILRRTNAILEKYLPPKTDIILFCKPYSQQILAFKDILQGARLDFGQLTFSSSLGLITLLKKVCNSPGLVGSDPYYKSHIKDTQSQDSYSRSLNSGKLKVLMTLLEGIRKGTKEKVVVVSNYTQTLDIIENLMNMAGMSHCRLDGSIPAKQRDSIVTSFNRNPAIFGFLLSAKSGGVGLNLVGASRLILFDNDWNPSVDLQAMSRIHRDGQKKPCFIYRLVTTGCIDEKILQRQLMKNSLSQKFLGDSEMRNKESSNDDLFNKEDLKDLFSVHTDTKSNTHDLICSCDGLGEEIEYPETNQQQNTVELRKRSTTTWTSALDLQKKMNEAATNDDAKKSQYIRQCLVHYKHIDPARQDELFDEVITDSFTELKDSITFAFVKPGEICLREQ.

The disordered stretch occupies residues 189-217 (EALSQNMGNPSPPTTSTTETVPSTKNDGG). Low complexity predominate over residues 202-212 (TTSTTETVPST). The region spanning 333 to 521 (LENDSDISGC…FTIIDFINPG (189 aa)) is the Helicase ATP-binding domain. 380-387 (IPLTGLCK) lines the ATP pocket. Residues 506–509 (NDLN) carry the DEGH box motif. Lys649 participates in a covalent cross-link: Glycyl lysine isopeptide (Lys-Gly) (interchain with G-Cter in ubiquitin). The Helicase C-terminal domain maps to 665 to 824 (KLKVLMTLLE…DSEMRNKESS (160 aa)).

Belongs to the SNF2/RAD54 helicase family. Interacts with RAD51 and DMC1.

It is found in the nucleus. It carries out the reaction ATP + H2O = ADP + phosphate + H(+). Its function is as follows. Involved in the recombinational repair of double-strand breaks (DSB) in DNA during mitosis and meiosis. Has DNA dependent ATPase activity. Promotes D-loop (displacement loop) formation with RAD51 recombinase. Modifies the topology of double-stranded DNA during the D-loop reaction to facilitate the invasion of the homologous duplex molecule by the initiating single-stranded DNA substrate. Required for adaptation from G2/M checkpoint arrest induced by a double strand break, by participating in monitoring the extent of single-stranded DNA produced by resection of DNA ends. This role is distinct from its roles in recombination. Promotes colocalization of RAD51 and DMC1 during meiotic recombination. Involved in crossover interference. The sequence is that of DNA repair and recombination protein RDH54 (RDH54) from Saccharomyces cerevisiae (strain ATCC 204508 / S288c) (Baker's yeast).